A 508-amino-acid polypeptide reads, in one-letter code: Adenosine deaminase (508 aa).

The N-terminal stretch at 1–18 (MFSQLVVWLLATSTVCLA) is a signal peptide.

Belongs to the metallo-dependent hydrolases superfamily. Adenosine and AMP deaminases family. ADGF subfamily. Requires Zn(2+) as cofactor. As to expression, salivary gland (at protein level).

The protein localises to the secreted. The enzyme catalyses adenosine + H2O + H(+) = inosine + NH4(+). Its function is as follows. Catalyzes the deamination of adenosine to inosine. In Lutzomyia longipalpis (Sand fly), this protein is Adenosine deaminase.